The following is a 165-amino-acid chain: UPF0303 protein ACP_1015 (165 aa).

Belongs to the UPF0303 family.

The protein is UPF0303 protein ACP_1015 of Acidobacterium capsulatum (strain ATCC 51196 / DSM 11244 / BCRC 80197 / JCM 7670 / NBRC 15755 / NCIMB 13165 / 161).